Reading from the N-terminus, the 539-residue chain is Tripartite motif-containing protein 26 (539 aa).

Residues 16–57 (CSICLDYLRDPVTIDCGHVFCRSCTTDVRPISGSRPVCPLCK) form an RING-type zinc finger. The B box-type zinc-finger motif lies at 97-138 (QDAKLCERHREKLHYYCEDDGKLLCVMCRESREHRPHTAVLM). The Zn(2+) site is built by cysteine 102, histidine 105, cysteine 124, and histidine 130. The stretch at 188 to 227 (IVAEFEQGHQFLREREEHLLEQLAKLEQELTEGREKFKSR) forms a coiled coil. Positions 295–539 (RGLREFQGKL…WPGTRLLLRP (245 aa)) constitute a B30.2/SPRY domain. The segment at 376–437 (REGWSEDEEE…EEEEEVLESC (62 aa)) is disordered. The segment covering 380 to 434 (SEDEEEGDEEEEGEEEEEEEEAGYGDGYDDWETDEDEESLGDEEEEEEEEEEEVL) has biased composition (acidic residues).

The protein belongs to the TRIM/RBCC family. In terms of assembly, interacts with TBK1; this interaction bridges together TBK1 and NEMO in order to activate TBK1. Interacts with INCA1. Autoubiquitinates upon viral infection. In turn, autoubiquitinated TRIM26 recruits NEMO and bridges TBK1-NEMO interaction.

The protein localises to the cytoplasm. It localises to the nucleus. It catalyses the reaction S-ubiquitinyl-[E2 ubiquitin-conjugating enzyme]-L-cysteine + [acceptor protein]-L-lysine = [E2 ubiquitin-conjugating enzyme]-L-cysteine + N(6)-ubiquitinyl-[acceptor protein]-L-lysine.. Functionally, E3 ubiquitin-protein ligase which regulates the IFN-beta production and antiviral response downstream of various DNA-encoded pattern-recognition receptors (PRRs). Also plays a central role in determining the response to different forms of oxidative stress by controlling levels of DNA glycosylases NEIL1, NEIL3 and NTH1 that are involved in repair of damaged DNA. Promotes nuclear IRF3 ubiquitination and proteasomal degradation. Bridges together TBK1 and NEMO during the innate response to viral infection leading to the activation of TBK1. Positively regulates LPS-mediated inflammatory innate immune response by catalyzing the 'Lys-11'-linked polyubiquitination of TAB1 to enhance its activation and subsequent NF-kappa-B and MAPK signaling. In a manner independent of its catalytic activity, inhibits WWP2, a SOX2-directed E3 ubiquitin ligase, and thus protects SOX2 from polyubiquitination and proteasomal degradation. Ubiquitinates the histone acetyltransferase protein complex component PHF20 and thereby triggers its degradation in the nucleus after its recruitment by the histone demethylase KDM6B, serving as a scaffold protein. Upon induction by TGF-beta, ubiquitinates the TFIID component TAF7 for proteasomal degradation. Induces ferroptosis by ubiquitinating SLC7A11, a critical protein for lipid reactive oxygen species (ROS) scavenging. Inhibits directly hepatitis B virus replication by mediating HBX ubiquitination and subsequent degradation. In terms of biological role, (Microbial infection) Promotes herpes simplex virus type 2/HHV-2 infection in vaginal epithelial cells by decreasing the nuclear localization of IRF3, the primary mediator of type I interferon activation. This is Tripartite motif-containing protein 26 (TRIM26) from Homo sapiens (Human).